Here is a 312-residue protein sequence, read N- to C-terminus: Protein-methionine-sulfoxide reductase catalytic subunit MsrP (312 aa).

The segment at residues methionine 1 to alanine 42 is a signal peptide (tat-type signal). Mo-molybdopterin is bound by residues asparagine 68, tyrosine 71–glutamate 72, cysteine 126, serine 161, asparagine 211, arginine 216, and glycine 227–lysine 229.

Belongs to the MsrP family. Heterodimer of a catalytic subunit (MsrP) and a heme-binding subunit (MsrQ). Mo-molybdopterin serves as cofactor. Post-translationally, predicted to be exported by the Tat system. The position of the signal peptide cleavage has not been experimentally proven.

It localises to the periplasm. The catalysed reaction is L-methionyl-[protein] + a quinone + H2O = L-methionyl-(S)-S-oxide-[protein] + a quinol. It carries out the reaction L-methionyl-[protein] + a quinone + H2O = L-methionyl-(R)-S-oxide-[protein] + a quinol. In terms of biological role, part of the MsrPQ system that repairs oxidized periplasmic proteins containing methionine sulfoxide residues (Met-O), using respiratory chain electrons. Thus protects these proteins from oxidative-stress damage caused by reactive species of oxygen and chlorine generated by the host defense mechanisms. MsrPQ is essential for the maintenance of envelope integrity under bleach stress, rescuing a wide series of structurally unrelated periplasmic proteins from methionine oxidation. The catalytic subunit MsrP is non-stereospecific, being able to reduce both (R-) and (S-) diastereoisomers of methionine sulfoxide. In Gluconobacter oxydans (strain 621H) (Gluconobacter suboxydans), this protein is Protein-methionine-sulfoxide reductase catalytic subunit MsrP.